The sequence spans 549 residues: Chaperonin GroEL (549 aa).

ATP-binding positions include 29–32 (TLGP), Lys50, 86–90 (DGTTT), Gly414, 477–479 (NAA), and Asp493.

It belongs to the chaperonin (HSP60) family. As to quaternary structure, forms a cylinder of 14 subunits composed of two heptameric rings stacked back-to-back. Interacts with the co-chaperonin GroES.

It is found in the cytoplasm. The enzyme catalyses ATP + H2O + a folded polypeptide = ADP + phosphate + an unfolded polypeptide.. Functionally, together with its co-chaperonin GroES, plays an essential role in assisting protein folding. The GroEL-GroES system forms a nano-cage that allows encapsulation of the non-native substrate proteins and provides a physical environment optimized to promote and accelerate protein folding. The polypeptide is Chaperonin GroEL (Geotalea uraniireducens (strain Rf4) (Geobacter uraniireducens)).